The following is a 354-amino-acid chain: Methionine import ATP-binding protein MetN (354 aa).

Residues 8–250 (LDHIDITFRQ…PKEALTQEFI (243 aa)) enclose the ABC transporter domain. 42 to 49 (GYSGAGKS) serves as a coordination point for ATP.

Belongs to the ABC transporter superfamily. Methionine importer (TC 3.A.1.24) family. In terms of assembly, the complex is composed of two ATP-binding proteins (MetN), two transmembrane proteins (MetI) and a solute-binding protein (MetQ).

It is found in the cell membrane. The catalysed reaction is L-methionine(out) + ATP + H2O = L-methionine(in) + ADP + phosphate + H(+). It catalyses the reaction D-methionine(out) + ATP + H2O = D-methionine(in) + ADP + phosphate + H(+). In terms of biological role, part of the ABC transporter complex MetNIQ involved in methionine import. Responsible for energy coupling to the transport system. The polypeptide is Methionine import ATP-binding protein MetN (Streptococcus pyogenes serotype M12 (strain MGAS2096)).